We begin with the raw amino-acid sequence, 225 residues long: MNSIKFPILDRTTKNSVISTTLNDLSNWSRLSSLWPLLYGTSCCFIEFASLIGSRFDFDRYGLVPRSSPRQADLILTAGTVTMKMAPSLVRLYEQMPEPKYVIAMGACTITGGMFSTDSYSTVRGVDKLIPVDVYLPGCPPKPEAVIDAITKLRKKIAREIYKDRIRPQQGNRCFTTNHKFFVVRSPHIGNYDQELLYPPSSTSEISTETFFKYKSPVSSHELVN.

[4Fe-4S] cluster contacts are provided by cysteine 43, cysteine 44, cysteine 108, and cysteine 139.

It belongs to the complex I 20 kDa subunit family. As to quaternary structure, NDH is composed of at least 16 different subunits, 5 of which are encoded in the nucleus. The cofactor is [4Fe-4S] cluster.

It localises to the plastid. The protein resides in the chloroplast thylakoid membrane. It catalyses the reaction a plastoquinone + NADH + (n+1) H(+)(in) = a plastoquinol + NAD(+) + n H(+)(out). It carries out the reaction a plastoquinone + NADPH + (n+1) H(+)(in) = a plastoquinol + NADP(+) + n H(+)(out). Its function is as follows. NDH shuttles electrons from NAD(P)H:plastoquinone, via FMN and iron-sulfur (Fe-S) centers, to quinones in the photosynthetic chain and possibly in a chloroplast respiratory chain. The immediate electron acceptor for the enzyme in this species is believed to be plastoquinone. Couples the redox reaction to proton translocation, and thus conserves the redox energy in a proton gradient. The sequence is that of NAD(P)H-quinone oxidoreductase subunit K, chloroplastic from Arabidopsis thaliana (Mouse-ear cress).